A 461-amino-acid polypeptide reads, in one-letter code: MSTGKIVKVIGAVVDVEFDQDSVPRVYDALNIIDGNNSSLVLEVQQQIGSGIVRCIAMGSSDGMRRGLVAVNTGEPITVPVGEETLGRIMNVLGQPIDECGEIGQKTSYPIHREPPSYEDQANSTELLETGVKVIDLICPFAKGGKIGLFGGAGVGKTVNMMELINNIAKAHSGLSVFTGVGERTREGNDFYYEMKEAGVLDKVAMVYGQMNEPPGNRLRVALTGLTIAERFRDEGRDVLLFIDNIYRYTLAGTEVSALLGRMPSAVGYQPTLAEEMGVLQERITSTHKGSITSIQAVYVPADDLTDPSPATTFAHLDATVVLSRNIAALGLYPAIDPLDSTSRQLDPLVVGVEHYDVARGVQTVLQRYKELKDIIAILGMDELSEDDKLTVARARKVERFLTQPYHVAEVFTGQPGIFVSLKDTLNGFKGLLSGEYDDVPEQAFLYCGAIEDVIEKAKTM.

151-158 (GGAGVGKT) contacts ATP.

Belongs to the ATPase alpha/beta chains family. F-type ATPases have 2 components, CF(1) - the catalytic core - and CF(0) - the membrane proton channel. CF(1) has five subunits: alpha(3), beta(3), gamma(1), delta(1), epsilon(1). CF(0) has three main subunits: a(1), b(2) and c(9-12). The alpha and beta chains form an alternating ring which encloses part of the gamma chain. CF(1) is attached to CF(0) by a central stalk formed by the gamma and epsilon chains, while a peripheral stalk is formed by the delta and b chains.

It is found in the cell inner membrane. The enzyme catalyses ATP + H2O + 4 H(+)(in) = ADP + phosphate + 5 H(+)(out). Functionally, produces ATP from ADP in the presence of a proton gradient across the membrane. The catalytic sites are hosted primarily by the beta subunits. This Photobacterium profundum (strain SS9) protein is ATP synthase subunit beta 2.